We begin with the raw amino-acid sequence, 129 residues long: Large ribosomal subunit protein uL22 (129 aa).

The protein belongs to the universal ribosomal protein uL22 family. As to quaternary structure, part of the 50S ribosomal subunit.

Functionally, this protein binds specifically to 23S rRNA; its binding is stimulated by other ribosomal proteins, e.g. L4, L17, and L20. It is important during the early stages of 50S assembly. It makes multiple contacts with different domains of the 23S rRNA in the assembled 50S subunit and ribosome. Its function is as follows. The globular domain of the protein is located near the polypeptide exit tunnel on the outside of the subunit, while an extended beta-hairpin is found that lines the wall of the exit tunnel in the center of the 70S ribosome. This Metamycoplasma hominis (strain ATCC 23114 / DSM 25592 / NBRC 14850 / NCTC 10111 / PG21) (Mycoplasma hominis) protein is Large ribosomal subunit protein uL22.